A 475-amino-acid chain; its full sequence is Putative F-box protein At3g58960 (475 aa).

The 49-residue stretch at 1–49 (MDRISSLSNDIISNIVSFLSAKDAAVASVLSKRWQNIYTIVPNLEFDNT) folds into the F-box domain.

The protein is Putative F-box protein At3g58960 of Arabidopsis thaliana (Mouse-ear cress).